The sequence spans 420 residues: Septin-8-A (420 aa).

The Septin-type G domain maps to 39–305 (QGFCFNILCV…ELYRRCKLEE (267 aa)). Residues 49 to 56 (GETGIGKS) are G1 motif. Residues 49–56 (GETGIGKS), Gly104, 185–193 (KADTISKSE), Gly239, and Arg254 contribute to the GTP site. Residues 101 to 104 (DTVG) are G3 motif. The G4 motif stretch occupies residues 184-187 (AKAD). The stretch at 321–407 (QETYEAKRKE…RRKVAAETLS (87 aa)) forms a coiled coil. Residues 393–420 (MNAFNRRKVAAETLSLSQPLKKDKDKKN) form a disordered region.

Belongs to the TRAFAC class TrmE-Era-EngA-EngB-Septin-like GTPase superfamily. Septin GTPase family.

This Danio rerio (Zebrafish) protein is Septin-8-A (sept8a).